The chain runs to 343 residues: Glycerol-3-phosphate dehydrogenase [NAD(P)+] (343 aa).

NADPH-binding residues include serine 11, tryptophan 12, arginine 32, and lysine 106. 3 residues coordinate sn-glycerol 3-phosphate: lysine 106, glycine 137, and serine 139. NADPH is bound at residue alanine 141. The sn-glycerol 3-phosphate site is built by lysine 192, aspartate 245, serine 255, arginine 256, and asparagine 257. The Proton acceptor role is filled by lysine 192. Arginine 256 contacts NADPH. NADPH is bound by residues valine 280 and glutamate 282.

The protein belongs to the NAD-dependent glycerol-3-phosphate dehydrogenase family.

The protein resides in the cytoplasm. It carries out the reaction sn-glycerol 3-phosphate + NAD(+) = dihydroxyacetone phosphate + NADH + H(+). It catalyses the reaction sn-glycerol 3-phosphate + NADP(+) = dihydroxyacetone phosphate + NADPH + H(+). It functions in the pathway membrane lipid metabolism; glycerophospholipid metabolism. Functionally, catalyzes the reduction of the glycolytic intermediate dihydroxyacetone phosphate (DHAP) to sn-glycerol 3-phosphate (G3P), the key precursor for phospholipid synthesis. The protein is Glycerol-3-phosphate dehydrogenase [NAD(P)+] of Syntrophomonas wolfei subsp. wolfei (strain DSM 2245B / Goettingen).